A 74-amino-acid chain; its full sequence is DNA-directed RNA polymerase subunit omega (74 aa).

Belongs to the RNA polymerase subunit omega family. The RNAP catalytic core consists of 2 alpha, 1 beta, 1 beta' and 1 omega subunit. When a sigma factor is associated with the core the holoenzyme is formed, which can initiate transcription.

The catalysed reaction is RNA(n) + a ribonucleoside 5'-triphosphate = RNA(n+1) + diphosphate. Functionally, promotes RNA polymerase assembly. Latches the N- and C-terminal regions of the beta' subunit thereby facilitating its interaction with the beta and alpha subunits. The chain is DNA-directed RNA polymerase subunit omega from Lactobacillus acidophilus (strain ATCC 700396 / NCK56 / N2 / NCFM).